Reading from the N-terminus, the 949-residue chain is MAM domain-containing glycosylphosphatidylinositol anchor protein 2 (949 aa).

An N-terminal signal peptide occupies residues 1 to 25; that stretch reads MDLVYGLVWLLTVLLEGISGQGVYA. Ig-like domains follow at residues 27–127 and 134–232; these read PTVR…IRVD and PVVT…KMVS. 2 disulfides stabilise this stretch: cysteine 62/cysteine 110 and cysteine 159/cysteine 216. N-linked (GlcNAc...) asparagine glycans are attached at residues asparagine 92, asparagine 213, and asparagine 237. Ig-like domains follow at residues 242 to 328, 340 to 436, 442 to 533, and 540 to 627; these read PSIK…NIIV, PDPY…VNIS, PNLT…ALVQ, and PAVE…FLVT. Cystine bridges form between cysteine 264–cysteine 310 and cysteine 359–cysteine 417. 5 N-linked (GlcNAc...) asparagine glycosylation sites follow: asparagine 434, asparagine 443, asparagine 504, asparagine 610, and asparagine 703. 2 cysteine pairs are disulfide-bonded: cysteine 465–cysteine 515 and cysteine 561–cysteine 611. The region spanning 638–738 is the Fibronectin type-III domain; the sequence is DTYNPVWQNR…TIRVIKYTGE (101 aa). Positions 739–914 constitute an MAM domain; the sequence is FHCGFEDGNI…VSIAEGECAK (176 aa). A lipid anchor (GPI-anchor amidated aspartate) is attached at aspartate 924. A propeptide spans 925 to 949 (removed in mature form); that stretch reads GAVGILVHIWLFPVIILISILSPRR.

As to quaternary structure, interacts (through the Ig-like domains) with NLGN2. In terms of tissue distribution, expressed predominantly in neuronal tissue. Expressed in brain.

The protein localises to the cell membrane. Functionally, may be involved in cell-cell interactions. This chain is MAM domain-containing glycosylphosphatidylinositol anchor protein 2 (Mdga2), found in Rattus norvegicus (Rat).